The sequence spans 100 residues: Urease subunit gamma (100 aa).

Belongs to the urease gamma subunit family. Heterotrimer of UreA (gamma), UreB (beta) and UreC (alpha) subunits. Three heterotrimers associate to form the active enzyme.

The protein localises to the cytoplasm. The catalysed reaction is urea + 2 H2O + H(+) = hydrogencarbonate + 2 NH4(+). It participates in nitrogen metabolism; urea degradation; CO(2) and NH(3) from urea (urease route): step 1/1. This chain is Urease subunit gamma, found in Klebsiella pneumoniae.